The following is a 590-amino-acid chain: Pentatricopeptide repeat-containing protein At2g46050, mitochondrial (590 aa).

A mitochondrion-targeting transit peptide spans 1 to 109 (MRFTFLRSTR…RNIVTWNILI (109 aa)). PPR repeat units follow at residues 141–175 (DHVS…GLES), 176–206 (SCFP…VLDR), 207–241 (DLVL…KNRF), 244–266 (DYFT…IHAI), 275–305 (DIPV…MVVR), 306–340 (NVVS…NLQP), 341–375 (DELT…GSAD), 376–406 (FLSV…IREP), 407–437 (DLVS…MLQK), 441–471 (DKIT…MTEF), and 477–507 (EDEH…MPTE). Residues 512–588 (ALAAFTGGCN…TPGCSWLGDY (77 aa)) are type E motif.

Belongs to the PPR family. PCMP-E subfamily.

Its subcellular location is the mitochondrion. The sequence is that of Pentatricopeptide repeat-containing protein At2g46050, mitochondrial (PCMP-E39) from Arabidopsis thaliana (Mouse-ear cress).